A 604-amino-acid chain; its full sequence is M-phase inducer phosphatase cdc-25.1 (604 aa).

Disordered stretches follow at residues 33–67 (PKTL…DVDF) and 127–188 (EKRV…PFGD). Over residues 44–54 (RDSGVSMTSCS) the composition is skewed to polar residues. The segment covering 127–138 (EKRVMSERPTDN) has biased composition (basic and acidic residues). One can recognise a Rhodanese domain in the interval 305–413 (FDKKYIIVDC…LWSTAECRQI (109 aa)). Disordered stretches follow at residues 443–464 (ASLK…CTRS) and 562–588 (DFPD…GGHQ).

Belongs to the MPI phosphatase family.

The enzyme catalyses O-phospho-L-tyrosyl-[protein] + H2O = L-tyrosyl-[protein] + phosphate. This is M-phase inducer phosphatase cdc-25.1 (cdc-25.1) from Caenorhabditis elegans.